Here is a 240-residue protein sequence, read N- to C-terminus: ATP-dependent dethiobiotin synthetase BioD (240 aa).

12 to 17 lines the ATP pocket; that stretch reads EIGKTV. T16 serves as a coordination point for Mg(2+). Residue K37 is part of the active site. S41 serves as a coordination point for substrate. ATP is bound by residues D54, 115 to 118, 179 to 180, and 207 to 209; these read EGSG, NQ, and PYI. Positions 54 and 115 each coordinate Mg(2+).

The protein belongs to the dethiobiotin synthetase family. In terms of assembly, homodimer. It depends on Mg(2+) as a cofactor.

It is found in the cytoplasm. The enzyme catalyses (7R,8S)-7,8-diammoniononanoate + CO2 + ATP = (4R,5S)-dethiobiotin + ADP + phosphate + 3 H(+). The protein operates within cofactor biosynthesis; biotin biosynthesis; biotin from 7,8-diaminononanoate: step 1/2. Functionally, catalyzes a mechanistically unusual reaction, the ATP-dependent insertion of CO2 between the N7 and N8 nitrogen atoms of 7,8-diaminopelargonic acid (DAPA, also called 7,8-diammoniononanoate) to form a ureido ring. The chain is ATP-dependent dethiobiotin synthetase BioD from Clostridium acetobutylicum (strain ATCC 824 / DSM 792 / JCM 1419 / IAM 19013 / LMG 5710 / NBRC 13948 / NRRL B-527 / VKM B-1787 / 2291 / W).